Here is a 151-residue protein sequence, read N- to C-terminus: Nucleoside diphosphate kinase (151 aa).

6 residues coordinate ATP: lysine 9, phenylalanine 57, arginine 86, threonine 92, arginine 103, and asparagine 113. Histidine 116 serves as the catalytic Pros-phosphohistidine intermediate.

It belongs to the NDK family. In terms of assembly, homotetramer. Mg(2+) serves as cofactor.

The protein localises to the cytoplasm. The catalysed reaction is a 2'-deoxyribonucleoside 5'-diphosphate + ATP = a 2'-deoxyribonucleoside 5'-triphosphate + ADP. It catalyses the reaction a ribonucleoside 5'-diphosphate + ATP = a ribonucleoside 5'-triphosphate + ADP. Major role in the synthesis of nucleoside triphosphates other than ATP. The ATP gamma phosphate is transferred to the NDP beta phosphate via a ping-pong mechanism, using a phosphorylated active-site intermediate. This chain is Nucleoside diphosphate kinase, found in Chloroflexus aggregans (strain MD-66 / DSM 9485).